The primary structure comprises 309 residues: Taste receptor type 2 member 66 (309 aa).

A topological domain (extracellular) is located at residue M1. Residues I2–F22 traverse the membrane as a helical segment. Over A23–Q46 the chain is Cytoplasmic. The helical transmembrane segment at I47–Y67 threads the bilayer. Residues A68 to N86 are Extracellular-facing. A helical transmembrane segment spans residues L87 to L107. Over L108–K126 the chain is Cytoplasmic. Residues S127–I147 traverse the membrane as a helical segment. At N148–T178 the chain is on the extracellular side. Residues N161 and N176 are each glycosylated (N-linked (GlcNAc...) asparagine). The chain crosses the membrane as a helical span at residues V179 to V199. Over C200–Q229 the chain is Cytoplasmic. Residues T230 to W250 traverse the membrane as a helical segment. At S251–P259 the chain is on the extracellular side. The chain crosses the membrane as a helical span at residues V260–I280. Residues W281–S309 are Cytoplasmic-facing.

This sequence belongs to the G-protein coupled receptor T2R family.

It localises to the membrane. Functionally, receptor that may play a role in the perception of bitterness and is gustducin-linked. May play a role in sensing the chemical composition of the gastrointestinal content. The activity of this receptor may stimulate alpha gustducin, mediate PLC-beta-2 activation and lead to the gating of TRPM5. The chain is Taste receptor type 2 member 66 (TAS2R66) from Pan paniscus (Pygmy chimpanzee).